A 66-amino-acid chain; its full sequence is Large ribosomal subunit protein bL35 (66 aa).

It belongs to the bacterial ribosomal protein bL35 family.

The protein is Large ribosomal subunit protein bL35 of Phenylobacterium zucineum (strain HLK1).